The chain runs to 47 residues: Delta-actitoxin-Ael1b (47 aa).

3 disulfide bridges follow: C4–C44, C6–C34, and C27–C45.

This sequence belongs to the sea anemone sodium channel inhibitory toxin family. Type I subfamily.

The protein resides in the secreted. The protein localises to the nematocyst. In terms of biological role, produces a positive inotropic effect in mammalian heart muscle. Modifies current passing through the fast sodium channel (Nav) in neuroblastoma cells, leading to delayed and incomplete inactivation. Paralyzes the shore crab (C.maenas) by tetanic contractions after intramuscular injection. In Anthopleura elegantissima (Green aggregating anemone), this protein is Delta-actitoxin-Ael1b.